Consider the following 256-residue polypeptide: Non-homologous end joining protein Ku 2 (256 aa).

One can recognise a Ku domain in the interval 13–184 (FADTDVAVKL…SLELQESPVS (172 aa)).

It belongs to the prokaryotic Ku family. As to quaternary structure, homodimer. Interacts with LigD.

With LigD forms a non-homologous end joining (NHEJ) DNA repair enzyme, which repairs dsDNA breaks with reduced fidelity. Binds linear dsDNA with 5'- and 3'- overhangs but not closed circular dsDNA nor ssDNA. Recruits and stimulates the ligase activity of LigD. The chain is Non-homologous end joining protein Ku 2 from Geotalea uraniireducens (strain Rf4) (Geobacter uraniireducens).